We begin with the raw amino-acid sequence, 261 residues long: Cytochrome c oxidase subunit 3 (261 aa).

At 1–15 the chain is on the mitochondrial matrix side; the sequence is MTHQTHAYHMVNPSP. The helical transmembrane segment at 16 to 34 threads the bilayer; that stretch reads WPLTGALSALLMTFGLIMW. The Mitochondrial intermembrane portion of the chain corresponds to 35-40; that stretch reads FHFNST. Residues 41-66 form a helical membrane-spanning segment; it reads ALLMLGLTTNMLTMYQWWRDIIREST. Residues 67-72 lie on the Mitochondrial matrix side of the membrane; the sequence is FQGHHT. A helical membrane pass occupies residues 73–105; that stretch reads PVVQKGLRYGMILFIISEVLFFTGFFWAFYHSS. The Mitochondrial intermembrane segment spans residues 106-128; it reads LAPTPELGGCWPPTGIHPLNPLE. Residues 129-152 form a helical membrane-spanning segment; the sequence is VPLLNTSVLLASGVSITWAHHSLM. Residues 153-155 are Mitochondrial matrix-facing; the sequence is EGH. The chain crosses the membrane as a helical span at residues 156–183; the sequence is RNHMLQALFITIALGVYFTLLQASEYYE. At 184 to 190 the chain is on the mitochondrial intermembrane side; sequence APFTISD. A helical transmembrane segment spans residues 191 to 223; sequence GVYGSTFFVATGFHGLHVIIGSTFLIVCFFRQL. The Mitochondrial matrix segment spans residues 224–232; that stretch reads KFHFTSSHH. The chain crosses the membrane as a helical span at residues 233–256; the sequence is FGFEAAAWYWHFVDVVWLFLYVSI. The Mitochondrial intermembrane segment spans residues 257–261; sequence YWWGS.

The protein belongs to the cytochrome c oxidase subunit 3 family. As to quaternary structure, component of the cytochrome c oxidase (complex IV, CIV), a multisubunit enzyme composed of 14 subunits. The complex is composed of a catalytic core of 3 subunits MT-CO1, MT-CO2 and MT-CO3, encoded in the mitochondrial DNA, and 11 supernumerary subunits COX4I, COX5A, COX5B, COX6A, COX6B, COX6C, COX7A, COX7B, COX7C, COX8 and NDUFA4, which are encoded in the nuclear genome. The complex exists as a monomer or a dimer and forms supercomplexes (SCs) in the inner mitochondrial membrane with NADH-ubiquinone oxidoreductase (complex I, CI) and ubiquinol-cytochrome c oxidoreductase (cytochrome b-c1 complex, complex III, CIII), resulting in different assemblies (supercomplex SCI(1)III(2)IV(1) and megacomplex MCI(2)III(2)IV(2)).

The protein resides in the mitochondrion inner membrane. It carries out the reaction 4 Fe(II)-[cytochrome c] + O2 + 8 H(+)(in) = 4 Fe(III)-[cytochrome c] + 2 H2O + 4 H(+)(out). Its function is as follows. Component of the cytochrome c oxidase, the last enzyme in the mitochondrial electron transport chain which drives oxidative phosphorylation. The respiratory chain contains 3 multisubunit complexes succinate dehydrogenase (complex II, CII), ubiquinol-cytochrome c oxidoreductase (cytochrome b-c1 complex, complex III, CIII) and cytochrome c oxidase (complex IV, CIV), that cooperate to transfer electrons derived from NADH and succinate to molecular oxygen, creating an electrochemical gradient over the inner membrane that drives transmembrane transport and the ATP synthase. Cytochrome c oxidase is the component of the respiratory chain that catalyzes the reduction of oxygen to water. Electrons originating from reduced cytochrome c in the intermembrane space (IMS) are transferred via the dinuclear copper A center (CU(A)) of subunit 2 and heme A of subunit 1 to the active site in subunit 1, a binuclear center (BNC) formed by heme A3 and copper B (CU(B)). The BNC reduces molecular oxygen to 2 water molecules using 4 electrons from cytochrome c in the IMS and 4 protons from the mitochondrial matrix. This Tragelaphus oryx (Eland) protein is Cytochrome c oxidase subunit 3 (MT-CO3).